Here is a 144-residue protein sequence, read N- to C-terminus: Cell division protein SepF (144 aa).

This sequence belongs to the SepF family. As to quaternary structure, homodimer. Interacts with FtsZ.

The protein localises to the cytoplasm. Cell division protein that is part of the divisome complex and is recruited early to the Z-ring. Probably stimulates Z-ring formation, perhaps through the cross-linking of FtsZ protofilaments. Its function overlaps with FtsA. The polypeptide is Cell division protein SepF (Oceanobacillus iheyensis (strain DSM 14371 / CIP 107618 / JCM 11309 / KCTC 3954 / HTE831)).